We begin with the raw amino-acid sequence, 874 residues long: MKKKLSKKYSFKEVEANKLLFWQENNLFKAQINSTKKPFTIVLPPPNVTGHLHIGHAYDFTLSDILMRYKKLKGYDSFIIPGTDHAGIATQTKFEKNLKVNAQTNRFNLGRELFLEKLKIWKDEQINYIHKQWNALGLGLDYSNYLFTLDPIVVQTVREVFVKMFNEHIIYRDKKLVNWDIQLKTAISNIEVIHKEVEQKLYYIKYLSQDQKDFVVVATSRPETMFGDKYLVINPKDKRYFHLHNKIFINPINNIEMTVILDDYIDIEFGTGVMKCTPAHDFNDYELAKKHNLEIINIMNADGTLNEKCGEFKGLDRLEARSLIIDKLQKNNHLLKVESYRTSVGFSERTNEIVEPYLSHQWFIKMDSLIKDTIKMQDDCNNKVDFYPNRFNKTLLTWLKNTEDWCISRQLWWGHQIPVWYHKKTNQIYCDTIPPKDLENWIQDEDVLDTWFSSGMWPLLTTKWNYNSHFFDRYFPTSLIVTGMDILFFWVSRMMNFSQYLVEKKPFKDVLIHGLIRDSQGRKMSKSLGNGIDPFDIIDKYGLDAMRLFFASCTTIGEDLNFSTERLGANWNYLNKIWNIAKYIENLDEINDNLNFEDVDKFCDVNKWILTELSKLTLEINKNMDKYNLVVATKYLYDFIWNTFASYYLEYTKVLLQDLTLKNETIKTIRYVFNKILIMLQPFAPNISEEIWLCLNQTNNSILLQEYPIINFEFETIIIDKIAKIILEIRKLRLEENINNRINLCFELISPNDAFYKSKIKLVNLLLILVNAEINEIKKTSSNNYTYELVIDDFILKTSYEKPIDYVFQMKKASEQLNYLENEIQRATNLLNNSGFINKAPAQLIIKEKNKLINLKKEHANLLKTLTDLKQKVK.

Positions Pro-46 to His-56 match the 'HIGH' region motif. The 'KMSKS' region signature appears at Lys-523–Ser-527. Lys-526 is a binding site for ATP. Residues Asp-805 to Lys-874 are a coiled coil.

It belongs to the class-I aminoacyl-tRNA synthetase family. ValS type 1 subfamily. Monomer.

The protein resides in the cytoplasm. The enzyme catalyses tRNA(Val) + L-valine + ATP = L-valyl-tRNA(Val) + AMP + diphosphate. Functionally, catalyzes the attachment of valine to tRNA(Val). As ValRS can inadvertently accommodate and process structurally similar amino acids such as threonine, to avoid such errors, it has a 'posttransfer' editing activity that hydrolyzes mischarged Thr-tRNA(Val) in a tRNA-dependent manner. The chain is Valine--tRNA ligase from Ureaplasma parvum serovar 3 (strain ATCC 700970).